A 91-amino-acid polypeptide reads, in one-letter code: Small ribosomal subunit protein uS19 (91 aa).

Belongs to the universal ribosomal protein uS19 family.

Protein S19 forms a complex with S13 that binds strongly to the 16S ribosomal RNA. The polypeptide is Small ribosomal subunit protein uS19 (Cupriavidus necator (strain ATCC 17699 / DSM 428 / KCTC 22496 / NCIMB 10442 / H16 / Stanier 337) (Ralstonia eutropha)).